Reading from the N-terminus, the 757-residue chain is MDVNPTLLFLKVPAQNAISTTFPYTGDPPYSHGTGTGYTMDTVNRTHQYSEKGKWTTNTETGAPQLNPIDGPLPEDNEPSGYAQTDCVLEAMAFLEESHPGIFENSCLETMEVVQQTRVDKLTQGRQTYDWTLNRNQPAATALANTIEVFRSNGLTANESGRLIDFLKDVMESMDKEEMEITTHFQRKRRVRDNMTKKMVTQRTIGKKKQKLNKRSYLIRALTLNTMTKDAERGKLKRRAIATPGMQIRGFVYFVETLARSICEKLEQSGLPVGGNEKKAKLANVVRKMMTNSQDTELSFTITGDNTKWNENQNPRMFLAMITYITRNQPEWFRNVLSIAPIMFSNKMARLGKGYMFESKGMKLRTQIPAEMLASIDLKYFNDSTRKKIEKIRPLLIDGTASLSPGMMMGMFNMLSTVLGVSILNLGQKRYTKTTYWWDGLQSSDDFALIVNAPNHEGIQAGVDRFYRTCKLVGINMSKKKSYINRTGTFEFTSFFYRYGFVANFSMELPSFGVSGINESADMSIGVTVIKNNMINNDLGPATAQMALQLFIKDYRYTYRCHRGDTQIQTRRSFELKKLWEQTRSKAGLLVSDGGPNLYNIRNLHIPEVCLKWELMDEDYQGRLCNPLNPFVSHKEIESVNNAVVMPAHGPAKSMEYDAVATTHSWIPKRNRSILNTSQRGILEDEQMYQKCCNLFEKFFPSSSYRRPVGISSMVEAMVSRARIDARIDFESGRIKKEEFAEIMKICSTIEELRRQK.

Residues 50-82 form a disordered region; that stretch reads SEKGKWTTNTETGAPQLNPIDGPLPEDNEPSGY. Over residues 55–64 the composition is skewed to polar residues; that stretch reads WTTNTETGAP. 2 short sequence motifs (nuclear localization signal) span residues 187–195 and 203–216; these read RKRRVRDNM and RTIGKKKQKLNKRS. The promoter-binding site stretch occupies residues 249 to 256; that stretch reads RGFVYFVE. A RdRp catalytic domain is found at 286–483; the sequence is VRKMMTNSQD…GINMSKKKSY (198 aa).

This sequence belongs to the influenza viruses polymerase PB1 family. Influenza RNA polymerase is composed of three subunits: PB1, PB2 and PA. Interacts (via N-terminus) with PA (via C-terminus). Interacts (via C-terminus) with PB2 (via N-terminus); this interaction is essential for transcription initiation. Phosphorylated by host PRKCA.

It localises to the host nucleus. The protein localises to the host cytoplasm. The enzyme catalyses RNA(n) + a ribonucleoside 5'-triphosphate = RNA(n+1) + diphosphate. Functionally, RNA-dependent RNA polymerase which is responsible for replication and transcription of virus RNA segments. The transcription of viral mRNAs occurs by a unique mechanism called cap-snatching. 5' methylated caps of cellular mRNAs are cleaved after 10-13 nucleotides by PA. In turn, these short capped RNAs are used as primers by PB1 for transcription of viral mRNAs. During virus replication, PB1 initiates RNA synthesis and copy vRNA into complementary RNA (cRNA) which in turn serves as a template for the production of more vRNAs. The polypeptide is RNA-directed RNA polymerase catalytic subunit (Influenza A virus (strain A/Turkey/Ontario/7732/1966 H5N9)).